The following is a 198-amino-acid chain: MARCKS-related protein (198 aa).

The disordered stretch occupies residues 1–198 (MGSQSSKAPR…DPAPASEQNE (198 aa)). Residue Gly-2 is the site of N-myristoyl glycine attachment. At Thr-14 the chain carries Phosphothreonine. Phosphoserine is present on residues Ser-22, Ser-36, Ser-41, and Ser-48. Positions 53–62 (GTEEAAGATG) are enriched in low complexity. Phosphoserine is present on Ser-71. The span at 76–85 (AKGEVPPKET) shows a compositional bias: basic and acidic residues. Phosphothreonine is present on Thr-85. Residues 86–98 (PKKKKKFSFKKPF) show a composition bias toward basic residues. The segment at 87 to 110 (KKKKKFSFKKPFKLSGLSFKRNRK) is effector domain involved in lipid-binding and calmodulin-binding. 3 positions are modified to phosphoserine; by PKC: Ser-93, Ser-101, and Ser-104. Ser-119 bears the Phosphoserine mark. Ser-120 is subject to Phosphoserine; by MAPK8. Ser-132 bears the Phosphoserine mark. At Thr-148 the chain carries Phosphothreonine; by MAPK8. 2 positions are modified to phosphoserine: Ser-151 and Ser-162. The segment covering 156–167 (AKGAEASAAAKG) has biased composition (low complexity). Thr-170 carries the phosphothreonine modification. The residue at position 182 (Thr-182) is a Phosphothreonine; by MAPK8.

The protein belongs to the MARCKS family. In terms of assembly, binds to filamentous actin (F-actin), but not to monomeric G-actin, independently of its phosphorylation status. Interacts with calmodulin. Phosphorylated. Phosphorylation at Ser-120 and Thr-182 is non-redundantly catalyzed by MAPK8 in vivo. Phosphorylation at Thr-148 is preferentially catalyzed by MAPK8 in vivo, but this modification can also be catalyzed by other kinases in the absence of MAPK8. May be phosphorylated by protein kinase C, which disrupts the interaction with calmodulin.

The protein resides in the cytoplasm. It is found in the cytoskeleton. Its subcellular location is the cell membrane. Its function is as follows. Controls cell movement by regulating actin cytoskeleton homeostasis and filopodium and lamellipodium formation. When unphosphorylated, induces cell migration. When phosphorylated by MAPK8, induces actin bundles formation and stabilization, thereby reducing actin plasticity, hence restricting cell movement, including neuronal migration. May be involved in coupling the protein kinase C and calmodulin signal transduction systems. This chain is MARCKS-related protein (MARCKSL1), found in Bos taurus (Bovine).